Reading from the N-terminus, the 411-residue chain is Serine/threonine transporter SstT (411 aa).

The next 8 membrane-spanning stretches (helical) occupy residues 17 to 37 (IMVG…TASA), 41 to 61 (LGAL…LVLV), 79 to 99 (ILFL…VVSF), 138 to 158 (ALIS…GLAL), 189 to 209 (LGIF…ALWG), 214 to 234 (LVVL…LIVF), 295 to 315 (MAGA…TLGI), and 327 to 347 (VVAA…LLLI).

Belongs to the dicarboxylate/amino acid:cation symporter (DAACS) (TC 2.A.23) family.

It is found in the cell inner membrane. The catalysed reaction is L-serine(in) + Na(+)(in) = L-serine(out) + Na(+)(out). It carries out the reaction L-threonine(in) + Na(+)(in) = L-threonine(out) + Na(+)(out). Its function is as follows. Involved in the import of serine and threonine into the cell, with the concomitant import of sodium (symport system). This Serratia proteamaculans (strain 568) protein is Serine/threonine transporter SstT.